A 223-amino-acid chain; its full sequence is Type III pantothenate kinase (223 aa).

17–24 (DIGNTRIH) is a binding site for ATP. Substrate-binding positions include Y81 and 85 to 88 (GIDR). Residue D87 is the Proton acceptor of the active site. D102 contacts K(+). S105 is a binding site for ATP. A substrate-binding site is contributed by T157.

It belongs to the type III pantothenate kinase family. Homodimer. The cofactor is NH4(+). K(+) is required as a cofactor.

The protein resides in the cytoplasm. It catalyses the reaction (R)-pantothenate + ATP = (R)-4'-phosphopantothenate + ADP + H(+). It functions in the pathway cofactor biosynthesis; coenzyme A biosynthesis; CoA from (R)-pantothenate: step 1/5. Its function is as follows. Catalyzes the phosphorylation of pantothenate (Pan), the first step in CoA biosynthesis. This Helicobacter pylori (strain J99 / ATCC 700824) (Campylobacter pylori J99) protein is Type III pantothenate kinase.